A 229-amino-acid chain; its full sequence is Enolase-phosphatase E1 (229 aa).

Residues Asp-7 and Glu-9 each contribute to the Mg(2+) site. Residues 122 to 123 (SS) and Lys-161 each bind substrate. Mg(2+) is bound at residue Asp-186.

This sequence belongs to the HAD-like hydrolase superfamily. MasA/MtnC family. Monomer. Mg(2+) is required as a cofactor.

It localises to the cytoplasm. The protein localises to the nucleus. The enzyme catalyses 5-methylsulfanyl-2,3-dioxopentyl phosphate + H2O = 1,2-dihydroxy-5-(methylsulfanyl)pent-1-en-3-one + phosphate. It functions in the pathway amino-acid biosynthesis; L-methionine biosynthesis via salvage pathway; L-methionine from S-methyl-5-thio-alpha-D-ribose 1-phosphate: step 3/6. Its pathway is amino-acid biosynthesis; L-methionine biosynthesis via salvage pathway; L-methionine from S-methyl-5-thio-alpha-D-ribose 1-phosphate: step 4/6. Bifunctional enzyme that catalyzes the enolization of 2,3-diketo-5-methylthiopentyl-1-phosphate (DK-MTP-1-P) into the intermediate 2-hydroxy-3-keto-5-methylthiopentenyl-1-phosphate (HK-MTPenyl-1-P), which is then dephosphorylated to form the acireductone 1,2-dihydroxy-3-keto-5-methylthiopentene (DHK-MTPene). This is Enolase-phosphatase E1 from Clavispora lusitaniae (strain ATCC 42720) (Yeast).